The following is a 458-amino-acid chain: Retinoic acid receptor alpha (458 aa).

The modulating stretch occupies residues 1–86 (MASNGGSCPS…PPPLPRIYKP (86 aa)). The span at 54–68 (TPSPATIETQSTSSE) shows a compositional bias: polar residues. Residues 54–76 (TPSPATIETQSTSSEEIVPSPPS) form a disordered region. 2 consecutive NR C4-type zinc fingers follow at residues 87–107 (CFVC…CEGC) and 123–147 (CHRD…LQKC). The segment at residues 87 to 152 (CFVCQDKSSG…RLQKCFEVGM (66 aa)) is a DNA-binding region (nuclear receptor). The interval 153 to 182 (SKESVRNDRNKKKKQEAPKQECTESYIITP) is hinge. In terms of domain architecture, NR LBD spans 183-417 (EVEDLVEKVR…PLIQEMLENS (235 aa)). The 9aaTAD motif lies at 408-416 (PLIQEMLEN). Residues 417–458 (SEGLDSLTGQPPRASSLAPPPGSCSPSLSPSSNRSSPTSHSP) form a disordered region. Positions 440 to 458 (CSPSLSPSSNRSSPTSHSP) are enriched in low complexity.

The protein belongs to the nuclear hormone receptor family. NR1 subfamily. Heterodimer; with an rxr molecule. Binds DNA preferentially as a rar/rxr heterodimer. In terms of tissue distribution, expressed in forelimb, in the distal forelimb blastema, kidney, liver and hindlimb blastemal mesenchymal cells.

Its subcellular location is the nucleus. Its function is as follows. Receptor for retinoic acid. Retinoic acid receptors bind as heterodimers to their target response elements in response to their ligands, all-trans or 9-cis retinoic acid, and regulate gene expression in various biological processes. The rar/rxr heterodimers bind to the retinoic acid response elements (RARE) composed of tandem 5'-AGGTCA-3' sites known as DR1-DR5. Retinoic acid signaling appears to be involved in specifying proximal-distal axis in limb regeneration. This Notophthalmus viridescens (Eastern newt) protein is Retinoic acid receptor alpha (RARA).